Reading from the N-terminus, the 200-residue chain is MVIFGLTGGIGSGKSLVASYFSTFFKAKIFDADKVVHELYKYDSDVIRLVSEYFPDSVDNGIVDRNNLRQHFLTDNHLWVEFQSVIHAIVLKKKKDFIMLHNRRSVRYVVLDIPLLIESNFYSCCDFIIHVTTSRLLQMQRVLRRGLSIKEFESIRCKQLSESSRKKFANFTIRTGLSKKDILFQIKKIMLNVNNKCNMD.

In terms of domain architecture, DPCK spans 3–200 (IFGLTGGIGS…LNVNNKCNMD (198 aa)). Residue 11 to 16 (GSGKSL) participates in ATP binding.

The protein belongs to the CoaE family.

It is found in the cytoplasm. The enzyme catalyses 3'-dephospho-CoA + ATP = ADP + CoA + H(+). Its pathway is cofactor biosynthesis; coenzyme A biosynthesis; CoA from (R)-pantothenate: step 5/5. Its function is as follows. Catalyzes the phosphorylation of the 3'-hydroxyl group of dephosphocoenzyme A to form coenzyme A. The polypeptide is Dephospho-CoA kinase (Ehrlichia canis (strain Jake)).